The chain runs to 528 residues: Lanosterol 14-alpha demethylase (528 aa).

A helical membrane pass occupies residues 15–37 (LSLSVTQQISILLGVPFVYNLVW). Position 64 (Tyr-64) interacts with oteseconazole. Tyr-118 provides a ligand contact to itraconazole. Posaconazole is bound at residue Gly-307. Residue His-377 participates in oteseconazole binding. Residue Cys-470 participates in heme binding.

It belongs to the cytochrome P450 family. Requires heme as cofactor.

The protein resides in the endoplasmic reticulum membrane. The catalysed reaction is a 14alpha-methyl steroid + 3 reduced [NADPH--hemoprotein reductase] + 3 O2 = a Delta(14) steroid + formate + 3 oxidized [NADPH--hemoprotein reductase] + 4 H2O + 4 H(+). It catalyses the reaction a 14alpha-methyl steroid + reduced [NADPH--hemoprotein reductase] + O2 = a 14alpha-hydroxymethyl steroid + oxidized [NADPH--hemoprotein reductase] + H2O + H(+). It carries out the reaction a 14alpha-hydroxymethyl steroid + reduced [NADPH--hemoprotein reductase] + O2 = a 14alpha-formyl steroid + oxidized [NADPH--hemoprotein reductase] + 2 H2O + H(+). The enzyme catalyses a 14alpha-formyl steroid + reduced [NADPH--hemoprotein reductase] + O2 = a Delta(14) steroid + formate + oxidized [NADPH--hemoprotein reductase] + H2O + 2 H(+). The catalysed reaction is lanosterol + 3 reduced [NADPH--hemoprotein reductase] + 3 O2 = 4,4-dimethyl-5alpha-cholesta-8,14,24-trien-3beta-ol + formate + 3 oxidized [NADPH--hemoprotein reductase] + 4 H2O + 4 H(+). It catalyses the reaction lanosterol + reduced [NADPH--hemoprotein reductase] + O2 = 32-hydroxylanosterol + oxidized [NADPH--hemoprotein reductase] + H2O + H(+). It carries out the reaction 32-hydroxylanosterol + reduced [NADPH--hemoprotein reductase] + O2 = 32-oxolanosterol + oxidized [NADPH--hemoprotein reductase] + 2 H2O + H(+). The enzyme catalyses 32-oxolanosterol + reduced [NADPH--hemoprotein reductase] + O2 = 4,4-dimethyl-5alpha-cholesta-8,14,24-trien-3beta-ol + formate + oxidized [NADPH--hemoprotein reductase] + H2O + 2 H(+). The catalysed reaction is eburicol + 3 reduced [NADPH--hemoprotein reductase] + 3 O2 = 14-demethyleburicol + formate + 3 oxidized [NADPH--hemoprotein reductase] + 4 H2O + 4 H(+). It catalyses the reaction eburicol + reduced [NADPH--hemoprotein reductase] + O2 = 32-hydroxyeburicol + oxidized [NADPH--hemoprotein reductase] + H2O + H(+). It carries out the reaction 32-hydroxyeburicol + reduced [NADPH--hemoprotein reductase] + O2 = 32-oxoeburicol + oxidized [NADPH--hemoprotein reductase] + 2 H2O + H(+). The enzyme catalyses 32-oxoeburicol + reduced [NADPH--hemoprotein reductase] + O2 = 14-demethyleburicol + formate + oxidized [NADPH--hemoprotein reductase] + H2O + 2 H(+). It participates in steroid biosynthesis; zymosterol biosynthesis; zymosterol from lanosterol: step 1/6. Its activity is regulated as follows. The catalytic activity is inhibited by the binding of azoles clotrimazole, miconazole, fluconazole, ketoconazole, oteseconazole (VT-1161), tetraconazole, the triazole SCH39304, and the triazole derivative ICI 153066. Sterol 14alpha-demethylase that plays a critical role in the third module of ergosterol biosynthesis pathway, being ergosterol the major sterol component in fungal membranes that participates in a variety of functions. The third module or late pathway involves the ergosterol synthesis itself through consecutive reactions that mainly occur in the endoplasmic reticulum (ER) membrane. In filamentous fungi, during the initial step of this module, lanosterol (lanosta-8,24-dien-3beta-ol) can be metabolized to eburicol. Sterol 14alpha-demethylase catalyzes the three-step oxidative removal of the 14alpha-methyl group (C-32) of both these sterols in the form of formate, and converts eburicol and lanosterol to 14-demethyleburicol (4,4,24-trimethylergosta-8,14,24(28)-trienol) and 4,4-dimethyl-5alpha-cholesta-8,14,24-trien-3beta-ol, respectively, which are further metabolized by other enzymes in the pathway to ergosterol. Can also use substrates not intrinsic to fungi, such as 24,25-dihydrolanosterol (DHL), producing 4,4-dimethyl-8,14-cholestadien-3-beta-ol, but at lower rates than the endogenous substrates. This is Lanosterol 14-alpha demethylase from Candida albicans (strain SC5314 / ATCC MYA-2876) (Yeast).